The sequence spans 244 residues: Phosphoadenosine 5'-phosphosulfate reductase (244 aa).

The active-site Nucleophile; cysteine thiosulfonate intermediate is the Cys-239.

The protein belongs to the PAPS reductase family. CysH subfamily.

Its subcellular location is the cytoplasm. The catalysed reaction is [thioredoxin]-disulfide + sulfite + adenosine 3',5'-bisphosphate + 2 H(+) = [thioredoxin]-dithiol + 3'-phosphoadenylyl sulfate. Its pathway is sulfur metabolism; hydrogen sulfide biosynthesis; sulfite from sulfate: step 3/3. Catalyzes the formation of sulfite from phosphoadenosine 5'-phosphosulfate (PAPS) using thioredoxin as an electron donor. The protein is Phosphoadenosine 5'-phosphosulfate reductase of Salmonella dublin (strain CT_02021853).